The primary structure comprises 122 residues: Ig heavy chain V region M511 (122 aa).

Positions 1–114 (EVKLVESGGG…SYWYFDVWGA (114 aa)) constitute an Ig-like domain.

The polypeptide is Ig heavy chain V region M511 (Mus musculus (Mouse)).